A 130-amino-acid polypeptide reads, in one-letter code: Ribosome-binding factor A (130 aa).

Belongs to the RbfA family. Monomer. Binds 30S ribosomal subunits, but not 50S ribosomal subunits or 70S ribosomes.

Its subcellular location is the cytoplasm. In terms of biological role, one of several proteins that assist in the late maturation steps of the functional core of the 30S ribosomal subunit. Associates with free 30S ribosomal subunits (but not with 30S subunits that are part of 70S ribosomes or polysomes). Required for efficient processing of 16S rRNA. May interact with the 5'-terminal helix region of 16S rRNA. This is Ribosome-binding factor A from Pseudomonas aeruginosa (strain LESB58).